Consider the following 177-residue polypeptide: Large ribosomal subunit protein uL6 (177 aa).

The protein belongs to the universal ribosomal protein uL6 family. In terms of assembly, part of the 50S ribosomal subunit.

Its function is as follows. This protein binds to the 23S rRNA, and is important in its secondary structure. It is located near the subunit interface in the base of the L7/L12 stalk, and near the tRNA binding site of the peptidyltransferase center. This is Large ribosomal subunit protein uL6 from Neisseria meningitidis serogroup B (strain ATCC BAA-335 / MC58).